The primary structure comprises 1067 residues: MGIKTLIWLSILVVGIYCEISDEDAPVHYCFVNPPPKTRLSPNLLQNITTCTHLVYGSIPIDRDTGYPQYSVSDVESGYDIDNIRTFMRLRKYHPNAKLLMGVVRTKPFEDAATSVKVANGLRSHVKSKRFDGLFVTFNGIHLEYRASTSFLETISKDKKMSLTFGVTGRRVFAFDALRRLQEINDLVEYIYLDMGELPSNEELARVTHINPLFYNGSIPFEETIQGTVEELSKEGILPSRIVVGLTAGGWKFEIKETQDPLKISHGQYAENNGKRVSYQDACRARGAVIYDWQTMNEITVYRQTWMSVNLPTIKAMGEKMKWILGQKFAGIGISHALFDDPRGDCGTDPLPAHRLVMELIRNTIPANPAKCTRLCYLDPEEVEETFPIDNLKSDYCSHIVVPYFALDLSDKMIEEDKAEDLVKKIDDWRSKIVEVAPRLILSVGSKQASTIWQFLLGNDFHRKELAEGLVKAINSTNADGLEISWTSQPMVSDFDKKNLKSFINDIVAADTAKMVEIVVATSQQSAYSDFYDYEHLNKTASLIVLHSHRLHSDSLPFTGHPSPLRATSSMTNQKMSWESLLSHWVEKRVLPSKLVLSLSASTLSMQSLADVRSSAATPFGQSAFVSMLRSKKGDIHSQQEICESLKSGTGVTHWVDGAEVPYLRRYDQMVAYENTRSAHIKAVWASMEGVGGLALHNMHQDDPSAVCDNRTAFPILNALSRAQVCQTCLKQHDFKKCEQHDFVVSCNFELKRSTPVFKTDIVPYERCTEVVVEQATLTLGGNVNFNDVQQEQVVKNLTSLRSKMVKCGMVLSLSCGDSEKYLNSILGDNMTFAIGNVMNIMEKYKFSGVQLDCEKVIRRGNHIYFNTFVKKLAQKFESGKASNGCNRTLSARFSHYTQKPSTYYSVSLLNRLSHIALRMTDKHSVDLPFFFNHTKPEFPSTEKFVNIWKNVGLKPDKLVLELSPFGWQTGKKVGEKKKMTQGVNCVTAGNRAVYEHDYETLTGMTKHENGTINMPMIEDFRYKIGYIQREQLGGIALNVNGDDYTGICGRGSFPILKSVYSSHKCR.

The signal sequence occupies residues 1-18 (MGIKTLIWLSILVVGIYC). GH18 domains are found at residues 26–364 (PVHY…IRNT), 372–727 (CTRL…QVCQ), and 743–1067 (FVVS…HKCR). Cysteines 30 and 51 form a disulfide. N-linked (GlcNAc...) asparagine glycosylation is found at Asn-47 and Asn-216. Cysteines 376 and 397 form a disulfide. Residues Asn-475, Asn-538, and Asn-710 are each glycosylated (N-linked (GlcNAc...) asparagine). Residues Cys-747 and Cys-768 are joined by a disulfide bond. 2 N-linked (GlcNAc...) asparagine glycosylation sites follow: Asn-797 and Asn-830. Catalysis depends on Glu-855, which acts as the Proton donor. 3 N-linked (GlcNAc...) asparagine glycosylation sites follow: Asn-887, Asn-933, and Asn-1010.

It belongs to the glycosyl hydrolase 18 family.

It localises to the secreted. Functionally, putative chitinase. The polypeptide is Chitinase-like protein C25A8.4 (cht-3) (Caenorhabditis elegans).